A 47-amino-acid chain; its full sequence is Large ribosomal subunit protein bL34 (47 aa).

The protein belongs to the bacterial ribosomal protein bL34 family.

The chain is Large ribosomal subunit protein bL34 (rpmH) from Mycobacterium leprae (strain TN).